Consider the following 246-residue polypeptide: Thaumatin-like protein 1 (246 aa).

The signal sequence occupies residues 1-24 (MMKSQAALLGLTTLAILFFSGAHA). 8 disulfide bridges follow: Cys-33-Cys-245, Cys-81-Cys-91, Cys-96-Cys-103, Cys-151-Cys-234, Cys-156-Cys-217, Cys-164-Cys-180, Cys-184-Cys-193, and Cys-194-Cys-204.

The protein belongs to the thaumatin family. In terms of tissue distribution, equally expressed in the abscission zone and surrounding tissues of both fruitlets and leaves.

Its subcellular location is the secreted. May be involved in protecting plant tissues from pathogen infection. The sequence is that of Thaumatin-like protein 1 from Prunus persica (Peach).